Reading from the N-terminus, the 91-residue chain is MYGKIIFVLLLSEIVSISALSTTEVAMHTSTSSSVTKSYISSQTNGETGQLVHRFTVPAPVVIILIILCVMAGIIGTILLISYSIRRLIKA.

The first 19 residues, 1–19 (MYGKIIFVLLLSEIVSISA), serve as a signal peptide directing secretion. Topologically, residues 20–59 (LSTTEVAMHTSTSSSVTKSYISSQTNGETGQLVHRFTVPA) are extracellular. Residue threonine 36 is glycosylated (O-linked (GalNAc...) threonine). Residue serine 38 is glycosylated (O-linked (GalNAc...) serine). A helical transmembrane segment spans residues 60-81 (PVVIILIILCVMAGIIGTILLI). The Cytoplasmic portion of the chain corresponds to 82–91 (SYSIRRLIKA).

The protein belongs to the glycophorin-A family. Component of the ankyrin-1 complex in the erythrocyte, composed of ANK1, RHCE, RHAG, SLC4A1, EPB42, GYPA, GYPB and AQP1. Interacts (via the N-terminal) with RHAG; this interaction bridges the (RHAG)2(RHCE) heterotrimer with the SLC4A1 Band 3 I dimer complexed with GYPA. The N-terminal extracellular domain is heavily glycosylated on serine and threonine residues.

It localises to the cell membrane. Its function is as follows. Component of the ankyrin-1 complex, a multiprotein complex involved in the stability and shape of the erythrocyte membrane. This Homo sapiens (Human) protein is Glycophorin-B.